The chain runs to 465 residues: Methylenetetrahydrofolate--tRNA-(uracil-5-)-methyltransferase TrmFO (465 aa).

3-8 (GAGLAG) lines the FAD pocket.

The protein belongs to the MnmG family. TrmFO subfamily. FAD is required as a cofactor.

Its subcellular location is the cytoplasm. It carries out the reaction uridine(54) in tRNA + (6R)-5,10-methylene-5,6,7,8-tetrahydrofolate + NADH + H(+) = 5-methyluridine(54) in tRNA + (6S)-5,6,7,8-tetrahydrofolate + NAD(+). The catalysed reaction is uridine(54) in tRNA + (6R)-5,10-methylene-5,6,7,8-tetrahydrofolate + NADPH + H(+) = 5-methyluridine(54) in tRNA + (6S)-5,6,7,8-tetrahydrofolate + NADP(+). Its function is as follows. Catalyzes the folate-dependent formation of 5-methyl-uridine at position 54 (M-5-U54) in all tRNAs. The polypeptide is Methylenetetrahydrofolate--tRNA-(uracil-5-)-methyltransferase TrmFO (Bradyrhizobium sp. (strain ORS 278)).